Here is a 1035-residue protein sequence, read N- to C-terminus: FACT complex subunit SPT16 (1035 aa).

A coiled-coil region spans residues 432–500 (FLKKEDEEEE…AKRRLTEQKG (69 aa)). 2 disordered regions span residues 491 to 520 (AKRR…ASQV) and 920 to 1035 (EQGG…KRKK). The segment covering 499–519 (KGGQQTMKARKSNVSYKNASQ) has biased composition (polar residues). Residues 929-985 (PDGEGSDAAEGDSESELDDETFNPSEDEEEEEEDSDEDYSDETEDSVDSEESADSEE) show a composition bias toward acidic residues. A compositionally biased stretch (basic and acidic residues) spans 986 to 1006 (ESGKDWDELEEEARKADRESL).

It belongs to the peptidase M24 family. SPT16 subfamily. In terms of assembly, component of the FACT complex (also called the DUF complex), a stable heterodimer of ssrp1 and supt16h. May also be a component of a ck2-spt16-ssrp1 complex composed of ssrp1, supt16h, csnk2a1, csnk2a2 and csnk2b. The FACT complex may also interact with vcp.

Its subcellular location is the nucleus. The protein localises to the chromosome. In terms of biological role, component of the FACT complex, a general chromatin factor that acts to reorganize nucleosomes. The FACT complex is involved in multiple processes that require DNA as a template such as mRNA elongation, DNA replication and DNA repair. During transcription elongation the FACT complex acts as a histone chaperone that both destabilizes and restores nucleosomal structure. It facilitates the passage of RNA polymerase II and transcription by promoting the dissociation of one histone H2A-H2B dimer from the nucleosome, then subsequently promotes the reestablishment of the nucleosome following the passage of RNA polymerase II. This chain is FACT complex subunit SPT16 (supt16h), found in Xenopus laevis (African clawed frog).